The primary structure comprises 108 residues: Large ribosomal subunit protein uL24 (108 aa).

This sequence belongs to the universal ribosomal protein uL24 family. Part of the 50S ribosomal subunit.

Functionally, one of two assembly initiator proteins, it binds directly to the 5'-end of the 23S rRNA, where it nucleates assembly of the 50S subunit. One of the proteins that surrounds the polypeptide exit tunnel on the outside of the subunit. The sequence is that of Large ribosomal subunit protein uL24 from Desulfosudis oleivorans (strain DSM 6200 / JCM 39069 / Hxd3) (Desulfococcus oleovorans).